A 113-amino-acid polypeptide reads, in one-letter code: Large ribosomal subunit protein bL19 (113 aa).

Belongs to the bacterial ribosomal protein bL19 family.

In terms of biological role, this protein is located at the 30S-50S ribosomal subunit interface and may play a role in the structure and function of the aminoacyl-tRNA binding site. This Mycobacterium leprae (strain Br4923) protein is Large ribosomal subunit protein bL19.